Here is a 364-residue protein sequence, read N- to C-terminus: DNA polymerase IV (364 aa).

One can recognise a UmuC domain in the interval 14-198 (IIHIDMDAFF…LPIEKFHGVG (185 aa)). Mg(2+) is bound by residues Asp-18 and Asp-116. The active site involves Glu-117.

It belongs to the DNA polymerase type-Y family. As to quaternary structure, monomer. Mg(2+) is required as a cofactor.

The protein resides in the cytoplasm. It carries out the reaction DNA(n) + a 2'-deoxyribonucleoside 5'-triphosphate = DNA(n+1) + diphosphate. Functionally, poorly processive, error-prone DNA polymerase involved in untargeted mutagenesis. Copies undamaged DNA at stalled replication forks, which arise in vivo from mismatched or misaligned primer ends. These misaligned primers can be extended by PolIV. Exhibits no 3'-5' exonuclease (proofreading) activity. May be involved in translesional synthesis, in conjunction with the beta clamp from PolIII. In Streptococcus pyogenes serotype M18 (strain MGAS8232), this protein is DNA polymerase IV.